Here is a 268-residue protein sequence, read N- to C-terminus: uncharacterized protein (268 aa).

A helical membrane pass occupies residues Leu150–Ala172.

The protein localises to the host membrane. This is an uncharacterized protein from Sulfolobus islandicus rod-shaped virus 1 (SIRV-1).